A 320-amino-acid polypeptide reads, in one-letter code: Methionyl-tRNA formyltransferase (320 aa).

114 to 117 lines the (6S)-5,6,7,8-tetrahydrofolate pocket; the sequence is SLLP.

It belongs to the Fmt family.

The catalysed reaction is L-methionyl-tRNA(fMet) + (6R)-10-formyltetrahydrofolate = N-formyl-L-methionyl-tRNA(fMet) + (6S)-5,6,7,8-tetrahydrofolate + H(+). Functionally, attaches a formyl group to the free amino group of methionyl-tRNA(fMet). The formyl group appears to play a dual role in the initiator identity of N-formylmethionyl-tRNA by promoting its recognition by IF2 and preventing the misappropriation of this tRNA by the elongation apparatus. The polypeptide is Methionyl-tRNA formyltransferase (Acinetobacter baumannii (strain AB0057)).